Here is a 215-residue protein sequence, read N- to C-terminus: Urease accessory protein UreG (215 aa).

11–18 is a GTP binding site; sequence GPVGAGKS.

Belongs to the SIMIBI class G3E GTPase family. UreG subfamily. Homodimer. UreD, UreF and UreG form a complex that acts as a GTP-hydrolysis-dependent molecular chaperone, activating the urease apoprotein by helping to assemble the nickel containing metallocenter of UreC. The UreE protein probably delivers the nickel.

Its subcellular location is the cytoplasm. Functionally, facilitates the functional incorporation of the urease nickel metallocenter. This process requires GTP hydrolysis, probably effectuated by UreG. This chain is Urease accessory protein UreG, found in Cenarchaeum symbiosum (strain A).